A 391-amino-acid chain; its full sequence is MADIDNKEQSELDQDLEDVEEVEEEETGEETKIKARQLTVQMMQNPQILAALQERLDGLVDTPTGYIESLPKVVKRRVNALKNLQVKCAQIEAKFYEEVHDLERKYAVLYQPLFDKRFEIINAIYEPTEEECEWKPDEEDEVSEELKEKAKIEDEKKDEEKEDPKGIPEFWLTVFKNVDLLSDMVQEHDEPILKHLKDIKVKFSDAGQPMSFVLEFHFEPNDYFTNEVLTKTYRMRSEPDDSDPFSFDGPEIMGCTGCQIDWKKGKNVTLKTIKKKQKHKGRGTVRTVTKTVSNDSFFNFFAPPEVPENGDLDDDAEAILAADFEIGHFLRERIIPRSVLYFTGEAIEDDDDDYDEEGEEADEEGEEEGDEENDPDYDPKKDQNPAECKQQ.

The span at 1–10 (MADIDNKEQS) shows a compositional bias: basic and acidic residues. The interval 1–32 (MADIDNKEQSELDQDLEDVEEVEEEETGEETK) is disordered. Alanine 2 bears the N-acetylalanine mark. Serine 10 is subject to Phosphoserine. A compositionally biased stretch (acidic residues) spans 11–28 (ELDQDLEDVEEVEEEETG). Phosphothreonine is present on residues threonine 62 and threonine 64. Serine 69 is modified (phosphoserine). Lysine 116 bears the N6-acetyllysine mark. An NAP1L motif motif is present at residues 125-150 (YEPTEEECEWKPDEEDEVSEELKEKA). The segment covering 131-143 (ECEWKPDEEDEVS) has biased composition (acidic residues). The interval 131 to 163 (ECEWKPDEEDEVSEELKEKAKIEDEKKDEEKED) is disordered. Phosphoserine is present on serine 143. Residues 144-163 (EELKEKAKIEDEKKDEEKED) show a composition bias toward basic and acidic residues. The Nuclear localization signal signature appears at 273–279 (IKKKQKH). The span at 346–376 (AIEDDDDDYDEEGEEADEEGEEEGDEENDPD) shows a compositional bias: acidic residues. The disordered stretch occupies residues 346-391 (AIEDDDDDYDEEGEEADEEGEEEGDEENDPDYDPKKDQNPAECKQQ). A 5-glutamyl polyglycine mark is found at glutamate 359 and glutamate 360. Positions 377-391 (YDPKKDQNPAECKQQ) are enriched in basic and acidic residues. Cysteine 388 is modified (cysteine methyl ester). Cysteine 388 carries the S-farnesyl cysteine lipid modification. A propeptide spans 389 to 391 (KQQ) (removed in mature form).

It belongs to the nucleosome assembly protein (NAP) family. Homodimer. The dimer binds strongly and sequentially to single and double H2A-H2B heterodimers. Interacts with ERCC6; this interaction increases ERCC6 processivity. Interacts with RAD54. Interacts with SETD1A. In terms of processing, polyglycylated by TTLL10 on glutamate residues, resulting in polyglycine chains on the gamma-carboxyl group. Both polyglutamylation and polyglycylation modifications can coexist on the same protein on adjacent residues, and lowering polyglycylation levels increases polyglutamylation, and reciprocally. Polyglutamylated by TTLL4 on glutamate residues, resulting in polyglutamate chains on the gamma-carboxyl group. Both polyglutamylation and polyglycylation modifications can coexist on the same protein on adjacent residues, and lowering polyglycylation levels increases polyglutamylation, and reciprocally. In terms of tissue distribution, highly expressed in the brain (at protein level). High expression in cerebral cortex, not in cerebellar cortex.

Its subcellular location is the nucleus. It localises to the cytoplasm. It is found in the melanosome. Functionally, histone chaperone that plays a role in the nuclear import of H2A-H2B and nucleosome assembly. Also participates in several important DNA repair mechanisms: greatly enhances ERCC6-mediated chromatin remodeling which is essential for transcription-coupled nucleotide excision DNA repair. Also stimulates homologous recombination (HR) by RAD51 and RAD54 which is essential in mitotic DNA double strand break (DSB) repair. Plays a key role in the regulation of embryonic neurogenesis. Promotes the proliferation of neural progenitors and inhibits neuronal differentiation during cortical development. Regulates neurogenesis via the modulation of RASSF10; regulates RASSF10 expression by promoting SETD1A-mediated H3K4 methylation at the RASSF10 promoter. This chain is Nucleosome assembly protein 1-like 1 (Nap1l1), found in Mus musculus (Mouse).